A 461-amino-acid polypeptide reads, in one-letter code: Vitamin K-dependent protein C (461 aa).

The first 18 residues, 1–18, serve as a signal peptide directing secretion; the sequence is MWQFRIFLLFASTWGISG. A propeptide spanning residues 19–41 is cleaved from the precursor; it reads VSAHPDPVFSSSEGAHQVLRVRR. Residues 42-87 enclose the Gla domain; that stretch reads ANSFLEEVRAGSLERECMEEICDFEEAQEIFQNVEDTLAFWIKYFD. Residues Glu47, Glu48, Glu55, Glu57, Glu60, Glu61, Glu66, Glu67, Glu70, and Glu76 each carry the 4-carboxyglutamate modification. Cys58 and Cys63 are joined by a disulfide. 9 disulfides stabilise this stretch: Cys91-Cys110, Cys100-Cys105, Cys104-Cys119, Cys121-Cys130, Cys139-Cys150, Cys146-Cys159, Cys161-Cys174, Cys182-Cys320, and Cys239-Cys255. 2 consecutive EGF-like domains span residues 96–131 and 135–175; these read LDHQCDSPCCGHGTCIDGLGGFSCSCDKGWEGRFCQ and GFQD…MHCR. Asp112 is modified ((3R)-3-hydroxyaspartate). One can recognise a Peptidase S1 domain in the interval 213–450; it reads IVNGTLTKQG…YLKWIHSYIG (238 aa). Asn215 carries N-linked (GlcNAc...) asparagine glycosylation. His254 serves as the catalytic Charge relay system. Asn291 carries an N-linked (GlcNAc...) asparagine glycan. Catalysis depends on Asp300, which acts as the Charge relay system. The N-linked (GlcNAc...) asparagine glycan is linked to Asn355. Cystine bridges form between Cys373–Cys387 and Cys398–Cys426. Ser402 (charge relay system) is an active-site residue.

Belongs to the peptidase S1 family. In terms of assembly, synthesized as a single chain precursor, which is cleaved into a light chain and a heavy chain held together by a disulfide bond. The enzyme is then activated by thrombin, which cleaves a tetradecapeptide from the amino end of the heavy chain; this reaction, which occurs at the surface of endothelial cells, is strongly promoted by thrombomodulin. In terms of processing, the vitamin K-dependent, enzymatic carboxylation of some Glu residues allows the modified protein to bind calcium. The iron and 2-oxoglutarate dependent 3-hydroxylation of aspartate and asparagine is (R) stereospecific within EGF domains. As to expression, plasma; synthesized in the liver.

The protein localises to the secreted. It is found in the golgi apparatus. The protein resides in the endoplasmic reticulum. The enzyme catalyses Degradation of blood coagulation factors Va and VIIIa.. Its function is as follows. Protein C is a vitamin K-dependent serine protease that regulates blood coagulation by inactivating factors Va and VIIIa in the presence of calcium ions and phospholipids. Exerts a protective effect on the endothelial cell barrier function. This chain is Vitamin K-dependent protein C (Proc), found in Rattus norvegicus (Rat).